The following is a 1477-amino-acid chain: Putative insulin-like peptide receptor (1477 aa).

Positions 1–24 (MMRNVQSFYFLFLLIVLNFHVVLS) are cleaved as a signal peptide. At 25–980 (AVCIGQRATT…LSVTKNNNQL (956 aa)) the chain is on the extracellular side. Residues N55, N255, N300, N325, N457, N491, N549, N644, N732, N791, N874, N895, and N957 are each glycosylated (N-linked (GlcNAc...) asparagine). 2 Fibronectin type-III domains span residues 652-750 (EPLG…IKAD) and 780-869 (NKSP…IVQA). Residues 880 to 971 (LDSKMVRVQV…EEIHFKVAEL (92 aa)) enclose the Fibronectin type-III 3 domain. A helical membrane pass occupies residues 981-1001 (IIGIISAVSAVIVALLVFILL). Topologically, residues 1002–1477 (YMFLHRKLEK…EIFYGKPIPV (476 aa)) are cytoplasmic. The region spanning 1044–1315 (IELIRELGQG…LENEVDDDFV (272 aa)) is the Protein kinase domain. ATP contacts are provided by residues 1050-1058 (LGQGSFGMV) and K1077. Residue D1175 is the Proton acceptor of the active site. Y1201 is modified (phosphotyrosine; by autocatalysis). Disordered stretches follow at residues 1350–1376 (YTKGDGNMQNMLSRSQNRKSAIEKSKE) and 1391–1421 (KYDANDTPEEIPKKKKRPRSKRNSAVDSNAC). Residues 1356-1368 (NMQNMLSRSQNRK) are compositionally biased toward polar residues. Residues 1403–1412 (KKKKRPRSKR) are compositionally biased toward basic residues.

The protein belongs to the protein kinase superfamily. Tyr protein kinase family. Insulin receptor subfamily. Requires Mn(2+) as cofactor. In terms of tissue distribution, expressed in dividing epithelial cells.

The protein localises to the membrane. It catalyses the reaction L-tyrosyl-[protein] + ATP = O-phospho-L-tyrosyl-[protein] + ADP + H(+). Its function is as follows. This receptor probably binds an insulin related protein and has a tyrosine-protein kinase activity. The chain is Putative insulin-like peptide receptor (HTK7) from Hydra vulgaris (Hydra).